A 594-amino-acid chain; its full sequence is Elongation factor 4 (594 aa).

The tr-type G domain occupies 2–184 (KNIRNFSIIA…TIVAKVPAPE (183 aa)). GTP is bound by residues 14-19 (DHGKST) and 131-134 (NKID).

This sequence belongs to the TRAFAC class translation factor GTPase superfamily. Classic translation factor GTPase family. LepA subfamily.

It localises to the cell inner membrane. It catalyses the reaction GTP + H2O = GDP + phosphate + H(+). In terms of biological role, required for accurate and efficient protein synthesis under certain stress conditions. May act as a fidelity factor of the translation reaction, by catalyzing a one-codon backward translocation of tRNAs on improperly translocated ribosomes. Back-translocation proceeds from a post-translocation (POST) complex to a pre-translocation (PRE) complex, thus giving elongation factor G a second chance to translocate the tRNAs correctly. Binds to ribosomes in a GTP-dependent manner. The polypeptide is Elongation factor 4 (Francisella tularensis subsp. tularensis (strain WY96-3418)).